The chain runs to 69 residues: Large ribosomal subunit protein bL31 (69 aa).

Residues C16, C18, C37, and C40 each contribute to the Zn(2+) site.

It belongs to the bacterial ribosomal protein bL31 family. Type A subfamily. In terms of assembly, part of the 50S ribosomal subunit. Zn(2+) serves as cofactor.

Binds the 23S rRNA. In Teredinibacter turnerae (strain ATCC 39867 / T7901), this protein is Large ribosomal subunit protein bL31.